Reading from the N-terminus, the 126-residue chain is Diadenosine hexaphosphate hydrolase (126 aa).

Residues 1-121 form the Nudix hydrolase domain; it reads MELGAGGVVF…EDLGLLEVAL (121 aa). Substrate is bound by residues 21-23 and 30-32; these read DRM and KGH. A Nudix box motif is present at residues 31–52; sequence GHPEPGESLEEAAVREVWEETG. E46 and E50 together coordinate Mg(2+). Substrate contacts are provided by residues 66-68, R74, and E112; that span reads YVN.

It belongs to the Nudix hydrolase family. As to quaternary structure, monomer. Mg(2+) is required as a cofactor.

It catalyses the reaction P(1),P(6)-bis(5'-adenosyl) hexaphosphate + H2O = 2 ATP + 2 H(+). The enzyme catalyses P(1),P(5)-bis(5'-adenosyl) pentaphosphate + H2O = ADP + ATP + 2 H(+). The catalysed reaction is P(1),P(4)-bis(5'-adenosyl) tetraphosphate + H2O = AMP + ATP + 2 H(+). Strongly inhibited by fluoride ions. Specifically hydrolyzes (di)adenosine polyphosphates but not ATP or diadenosine triphosphate, generating ATP as the product. Diadenosine hexaphosphate (Ap6A) is the preferred substrate and hydrolysis yields 2 ATP. It is the only enzyme that symmetrically hydrolyzes Ap6A. It also hydrolyzes diadenosine pentaphosphate (Ap5A), diadenosine tetraphosphate (Ap4A) and adenosine tetraphosphate (p4A). In Thermus thermophilus, this protein is Diadenosine hexaphosphate hydrolase.